Reading from the N-terminus, the 443-residue chain is Squalene synthase (443 aa).

Transmembrane regions (helical) follow at residues 291–311 (TSFN…ELVF) and 423–443 (ILLL…VRII).

The protein belongs to the phytoene/squalene synthase family. It depends on Mg(2+) as a cofactor.

The protein resides in the endoplasmic reticulum membrane. It carries out the reaction 2 (2E,6E)-farnesyl diphosphate + NADPH + H(+) = squalene + 2 diphosphate + NADP(+). The enzyme catalyses 2 (2E,6E)-farnesyl diphosphate + NADH + H(+) = squalene + 2 diphosphate + NAD(+). The protein operates within terpene metabolism; lanosterol biosynthesis; lanosterol from farnesyl diphosphate: step 1/3. Catalyzes the condensation of 2 two farnesyl pyrophosphate moieties to form squalene. It is the first committed enzyme of the sterol biosynthesis pathway. Required for the biosynthesis of ergosterol. The polypeptide is Squalene synthase (ERG9) (Cyberlindnera jadinii (Torula yeast)).